Consider the following 283-residue polypeptide: Cyclin-C (283 aa).

A Cyclin N-terminal domain is found at Asn46–Glu144. Residues Thr252–Ser283 are disordered. Positions Glu267–Ser283 are enriched in polar residues.

Belongs to the cyclin family. Cyclin C subfamily. As to quaternary structure, component of the Mediator complex. The cylin/CDK pair formed by ccnc/cdk8 also associates with the large subunit of RNA polymerase II.

It is found in the nucleus. Functionally, component of the Mediator complex, a coactivator involved in regulated gene transcription of nearly all RNA polymerase II-dependent genes. Mediator functions as a bridge to convey information from gene-specific regulatory proteins to the basal RNA polymerase II transcription machinery. Mediator is recruited to promoters by direct interactions with regulatory proteins and serves as a scaffold for the assembly of a functional preinitiation complex with RNA polymerase II and the general transcription factors. Binds to and activates cyclin-dependent kinase cdk8 that phosphorylates the CTD (C-terminal domain) of the large subunit of RNA polymerase II (RNAp II), which may inhibit the formation of a transcription initiation complex. The sequence is that of Cyclin-C (ccnc) from Xenopus tropicalis (Western clawed frog).